The following is a 712-amino-acid chain: TIR domain-containing adapter molecule 1 (712 aa).

A TRIF-NTD region spans residues 1–153; that stretch reads MACTGPSLPS…CGWDIAGDPG (153 aa). The TRAF6-binding motif lies at 84–91; it reads EDPEEPPD. Positions 207 to 210 match the pLxIS motif motif; sequence LEIS. Ser210 carries the post-translational modification Phosphoserine; by TBK1. Disordered regions lie at residues 216–316 and 336–384; these read PFLS…SLPL and LSVE…LFPS. Lys229 is covalently cross-linked (Glycyl lysine isopeptide (Lys-Gly) (interchain with G-Cter in ubiquitin)). The TRAF6-binding motif lies at 248-255; that stretch reads QEPEEMSW. The segment covering 265-275 has biased composition (pro residues); sequence PELPSSPPPGL. Residues 299–309 carry the TRAF6-binding motif; that stretch reads NYPVECTEGSA. The span at 347 to 369 shows a compositional bias: pro residues; sequence KPCPPTPTTPETSPPPPPPPPSS. Positions 393 to 553 constitute a TIR domain; sequence KFYNFVILHA…QDTRALREQS (161 aa). The segment at 512-712 is sufficient to induce apoptosis; the sequence is RLDEHSQIFA…APEDKTQEAE (201 aa). Pro residues-rich tracts occupy residues 620-633 and 640-649; these read PFPT…PPPL and TPPPPSPQPA. A disordered region spans residues 620 to 677; it reads PFPTWPGCPQPPPLHAWQAGTPPPPSPQPAAFPQSLPFPQSPAFPTASPAPPQSPGLQ. A compositionally biased stretch (low complexity) spans 650-666; that stretch reads AFPQSLPFPQSPAFPTA.

In terms of assembly, homodimer. Found in a multi-helicase-TICAM1 complex at least composed of DHX36, DDX1, DDX21 and TICAM1; this complex exists in resting cells with or without poly(I:C) RNA ligand stimulation. Interacts (via TIR domain) with DDX21 (via C-terminus). Interacts (via TIR domain) with DHX36 (via C-terminus). Interacts with AZI2 and IRF7. Interacts with TICAM2 in TLR4 recruitment. Interaction with PIAS4 inhibits the TICAM1-induced NF-kappa-B, IRF and IFNB1 activation. Interacts with IKBKB and IKBKE. Interaction with SARM1 blocks TICAM1-dependent transcription factor activation. Interacts with TRAF3. Interacts (when phosphorylated) with IRF3; following activation and phosphorylation on the pLxIS motif by TBK1, recruits IRF3. Interacts with TBK1, TRAF6 and RIPK1 and these interactions are enhanced in the presence of WDFY1. Interacts with TRAFD1. Interacts with UBQLN1 (via UBA domain). Interacts with TLR4. Interacts with WDFY1 in response to poly(I:C). Interacts (via the TIR domain) with TLR3 in response to poly(I:C) and this interaction is enhanced in the presence of WDFY1. Interacts with TRIM56. Component of a multi-helicase-TICAM1 complex that acts as a cytoplasmic sensor of viral double-stranded RNA (dsRNA) and plays a role in the activation of a cascade of antiviral responses including the induction of pro-inflammatory cytokines. Interacts (via the TIR domain) with TLR5. Interacts with TRIM8. Interacts with TAX1BP1 and TRIM32; these interactions target TICAM1 to TAX1BP1-mediated selective autophagic degradation. Interacts with DDX50. (Microbial infection) Interacts with hepatitis C virus (HCV) NS3/4A protease; this interaction leads to TICAM1 cleavage, thereby disrupting TLR3 signaling and preventing the establishment of an antiviral state. As to quaternary structure, (Microbial infection) Interacts with Seneca Valley virus protease 3C; this interaction allows the cleavage of TICAM1/TRIF and subsequent suppression of host innate immunity. In terms of assembly, (Microbial infection) Interacts (via C-terminus) with coxsackievirus B3 (CVB3) protease 3C. Phosphorylated by TBK1. Following activation, phosphorylated by TBK1 at Ser-210 in the pLxIS motif. The phosphorylated pLxIS motif constitutes an IRF3-binding motif, leading to recruitment of the transcription factor IRF3 to induce type-I interferons and other cytokines. Post-translationally, polyubiquitinated at Lys-229 by TRIM38 with 'Lys-48'-linked chains, leading to proteasomal degradation. Polyubiquitinated with 'Lys-6'- and 'Lys-33'-linked chains in a TRIM8-dependent manner; ubiquitination disrupts the interaction with TBK1 and subsequent interferon production. In terms of processing, (Microbial infection) Cleaved and degraded by hepatitis A virus (HAV) protein 3CD allowing the virus to disrupt host TLR3 signaling. (Microbial infection) Cleaved by CVB3 protease 3C allowing the virus to disrupt host TLR3 signaling. Post-translationally, (Microbial infection) Cleaved by Seneca Valley virus protease 3C allowing the virus to disrupt host TLR3 signaling. In terms of processing, (Microbial infection) Cleaved by protease 3C of human enterovirus D68 (EV68) allowing the virus to disrupt host TLR3 signaling. (Microbial infection) Cleaved by HCV protease NS3/4A, thereby disrupting TLR3 signaling and preventing the establishment of an antiviral state. As to expression, ubiquitously expressed but with higher levels in liver.

The protein localises to the cytoplasmic vesicle. It localises to the autophagosome. It is found in the cytoplasm. The protein resides in the cytosol. Its subcellular location is the mitochondrion. Functionally, involved in innate immunity against invading pathogens. Adapter used by TLR3, TLR4 (through TICAM2) and TLR5 to mediate NF-kappa-B and interferon-regulatory factor (IRF) activation, and to induce apoptosis. Ligand binding to these receptors results in TRIF recruitment through its TIR domain. Distinct protein-interaction motifs allow recruitment of the effector proteins TBK1, TRAF6 and RIPK1, which in turn, lead to the activation of transcription factors IRF3 and IRF7, NF-kappa-B and FADD respectively. Phosphorylation by TBK1 on the pLxIS motif leads to recruitment and subsequent activation of the transcription factor IRF3 to induce expression of type I interferon and exert a potent immunity against invading pathogens. Component of a multi-helicase-TICAM1 complex that acts as a cytoplasmic sensor of viral double-stranded RNA (dsRNA) and plays a role in the activation of a cascade of antiviral responses including the induction of pro-inflammatory cytokines. This is TIR domain-containing adapter molecule 1 (TICAM1) from Homo sapiens (Human).